The following is a 341-amino-acid chain: Methionine import ATP-binding protein MetN 2 (341 aa).

An ABC transporter domain is found at 2 to 241 (IELKEVVKEY…PQHTVTKRFV (240 aa)). 38 to 45 (GFSGAGKS) lines the ATP pocket.

This sequence belongs to the ABC transporter superfamily. Methionine importer (TC 3.A.1.24) family. As to quaternary structure, the complex is composed of two ATP-binding proteins (MetN), two transmembrane proteins (MetI) and a solute-binding protein (MetQ).

The protein localises to the cell membrane. The catalysed reaction is L-methionine(out) + ATP + H2O = L-methionine(in) + ADP + phosphate + H(+). It carries out the reaction D-methionine(out) + ATP + H2O = D-methionine(in) + ADP + phosphate + H(+). Part of the ABC transporter complex MetNIQ involved in methionine import. Responsible for energy coupling to the transport system. In Staphylococcus aureus (strain USA300), this protein is Methionine import ATP-binding protein MetN 2.